Consider the following 940-residue polypeptide: Isoleucine--tRNA ligase (940 aa).

The short motif at 58–68 is the 'HIGH' region element; it reads PYANGNIHIGH. An L-isoleucyl-5'-AMP-binding site is contributed by glutamate 563. The 'KMSKS' region signature appears at 604 to 608; the sequence is KMSKS. Lysine 607 lines the ATP pocket. The Zn(2+) site is built by cysteine 903, cysteine 906, cysteine 923, and cysteine 926.

Belongs to the class-I aminoacyl-tRNA synthetase family. IleS type 1 subfamily. Monomer. The cofactor is Zn(2+).

The protein localises to the cytoplasm. The enzyme catalyses tRNA(Ile) + L-isoleucine + ATP = L-isoleucyl-tRNA(Ile) + AMP + diphosphate. In terms of biological role, catalyzes the attachment of isoleucine to tRNA(Ile). As IleRS can inadvertently accommodate and process structurally similar amino acids such as valine, to avoid such errors it has two additional distinct tRNA(Ile)-dependent editing activities. One activity is designated as 'pretransfer' editing and involves the hydrolysis of activated Val-AMP. The other activity is designated 'posttransfer' editing and involves deacylation of mischarged Val-tRNA(Ile). The protein is Isoleucine--tRNA ligase of Buchnera aphidicola subsp. Acyrthosiphon pisum (strain APS) (Acyrthosiphon pisum symbiotic bacterium).